The primary structure comprises 424 residues: D-inositol 3-phosphate glycosyltransferase (424 aa).

Residue His20 coordinates 1D-myo-inositol 3-phosphate. UDP-N-acetyl-alpha-D-glucosamine is bound by residues 26–27 (QP) and Gly34. 1D-myo-inositol 3-phosphate-binding positions include 31–36 (DAGGMN), Lys89, Tyr122, Thr146, and Arg166. Positions 240, 245, and 306 each coordinate UDP-N-acetyl-alpha-D-glucosamine. Mg(2+)-binding residues include Tyr315, Arg316, and Ala318. The UDP-N-acetyl-alpha-D-glucosamine site is built by Glu328 and Glu336. Thr342 serves as a coordination point for Mg(2+).

The protein belongs to the glycosyltransferase group 1 family. MshA subfamily. As to quaternary structure, homodimer.

The catalysed reaction is 1D-myo-inositol 3-phosphate + UDP-N-acetyl-alpha-D-glucosamine = 1D-myo-inositol 2-acetamido-2-deoxy-alpha-D-glucopyranoside 3-phosphate + UDP + H(+). In terms of biological role, catalyzes the transfer of a N-acetyl-glucosamine moiety to 1D-myo-inositol 3-phosphate to produce 1D-myo-inositol 2-acetamido-2-deoxy-glucopyranoside 3-phosphate in the mycothiol biosynthesis pathway. The sequence is that of D-inositol 3-phosphate glycosyltransferase from Kribbella flavida (strain DSM 17836 / JCM 10339 / NBRC 14399).